Consider the following 82-residue polypeptide: uncharacterized protein (82 aa).

This is an uncharacterized protein from Saccharomyces cerevisiae (strain ATCC 204508 / S288c) (Baker's yeast).